The chain runs to 285 residues: UPF0014 membrane protein STAR2 (285 aa).

7 helical membrane-spanning segments follow: residues F30–L50, Y64–F84, S88–G108, H119–L139, Y148–M168, S203–G225, and A240–S262.

The protein belongs to the UPF0014 family. As to quaternary structure, interacts with STAR2. In terms of tissue distribution, expressed in roots.

It localises to the membrane. Associates with STAR2 to form a functional transmembrane ABC transporter required for detoxification of aluminum (Al) in roots. Can specifically transport UDP-glucose. This chain is UPF0014 membrane protein STAR2, found in Oryza sativa subsp. japonica (Rice).